The chain runs to 219 residues: Uracil-DNA glycosylase (219 aa).

Asp-59 (proton acceptor) is an active-site residue.

The protein belongs to the uracil-DNA glycosylase (UDG) superfamily. UNG family.

It localises to the cytoplasm. The enzyme catalyses Hydrolyzes single-stranded DNA or mismatched double-stranded DNA and polynucleotides, releasing free uracil.. Its function is as follows. Excises uracil residues from the DNA which can arise as a result of misincorporation of dUMP residues by DNA polymerase or due to deamination of cytosine. The protein is Uracil-DNA glycosylase of Staphylococcus haemolyticus (strain JCSC1435).